Reading from the N-terminus, the 373-residue chain is Protein U3 (373 aa).

The protein belongs to the herpesviridae US22 family.

This is Protein U3 (U3) from Human herpesvirus 6A (strain Uganda-1102) (HHV-6 variant A).